Consider the following 79-residue polypeptide: Translational regulator CsrA (79 aa).

Belongs to the CsrA/RsmA family. As to quaternary structure, homodimer; the beta-strands of each monomer intercalate to form a hydrophobic core, while the alpha-helices form wings that extend away from the core.

It localises to the cytoplasm. A translational regulator that binds mRNA to regulate translation initiation and/or mRNA stability. Usually binds in the 5'-UTR at or near the Shine-Dalgarno sequence preventing ribosome-binding, thus repressing translation. Its main target seems to be the major flagellin gene, while its function is anatagonized by FliW. This is Translational regulator CsrA from Shouchella clausii (strain KSM-K16) (Alkalihalobacillus clausii).